The chain runs to 218 residues: Claudin-5 (218 aa).

The Cytoplasmic segment spans residues methionine 1–glutamate 7. Residues isoleucine 8 to proline 28 form a helical membrane-spanning segment. Residues methionine 29–arginine 81 are Extracellular-facing. A helical transmembrane segment spans residues alanine 82–alanine 102. Residues glutamine 103–glycine 122 lie on the Cytoplasmic side of the membrane. The chain crosses the membrane as a helical span at residues valine 123–valine 143. Topologically, residues valine 144–glutamate 159 are extracellular. Residues leucine 160–leucine 180 form a helical membrane-spanning segment. At leucine 181–valine 218 the chain is on the cytoplasmic side. The segment at tyrosine 217–valine 218 is interactions with TJP1, TJP2 and TJP3.

Belongs to the claudin family. Directly interacts with TJP1/ZO-1, TJP2/ZO-2 and TJP3/ZO-3. Interacts with MPDZ.

Its subcellular location is the cell junction. The protein resides in the tight junction. It localises to the cell membrane. Functionally, plays a major role in tight junction-specific obliteration of the intercellular space. This is Claudin-5 (CLDN5) from Homo sapiens (Human).